A 420-amino-acid polypeptide reads, in one-letter code: Bone morphogenetic protein 2 (420 aa).

The signal sequence occupies residues 1-23; sequence MVAVVRSLMVLLLAQVLLEGATG. A propeptide spanning residues 24 to 303 is cleaved from the precursor; it reads LIPEVGRRRY…DSVLHTREKR (280 aa). N-linked (GlcNAc...) asparagine glycosylation is found at Asn138, Asn167, Asn168, Asn172, and Asn362. Disulfide bonds link Cys320/Cys385, Cys349/Cys417, and Cys353/Cys419.

The protein belongs to the TGF-beta family. As to quaternary structure, homodimer; disulfide-linked.

It is found in the secreted. Induces cartilage and bone formation. In Tetraodon nigroviridis (Spotted green pufferfish), this protein is Bone morphogenetic protein 2 (bmp2).